A 185-amino-acid polypeptide reads, in one-letter code: Lysozyme g (185 aa).

E73 is a catalytic residue.

Belongs to the glycosyl hydrolase 23 family.

The catalysed reaction is Hydrolysis of (1-&gt;4)-beta-linkages between N-acetylmuramic acid and N-acetyl-D-glucosamine residues in a peptidoglycan and between N-acetyl-D-glucosamine residues in chitodextrins.. The sequence is that of Lysozyme g from Cyprinus carpio (Common carp).